Consider the following 962-residue polypeptide: Glycine dehydrogenase (decarboxylating) (962 aa).

An N6-(pyridoxal phosphate)lysine modification is found at K709.

It belongs to the GcvP family. The glycine cleavage system is composed of four proteins: P, T, L and H. Pyridoxal 5'-phosphate serves as cofactor.

The enzyme catalyses N(6)-[(R)-lipoyl]-L-lysyl-[glycine-cleavage complex H protein] + glycine + H(+) = N(6)-[(R)-S(8)-aminomethyldihydrolipoyl]-L-lysyl-[glycine-cleavage complex H protein] + CO2. Functionally, the glycine cleavage system catalyzes the degradation of glycine. The P protein binds the alpha-amino group of glycine through its pyridoxal phosphate cofactor; CO(2) is released and the remaining methylamine moiety is then transferred to the lipoamide cofactor of the H protein. This Shewanella sp. (strain ANA-3) protein is Glycine dehydrogenase (decarboxylating).